A 283-amino-acid chain; its full sequence is Bifunctional protein FolD (283 aa).

NADP(+) is bound by residues 165–167 (GRS), Ser190, and Val231.

This sequence belongs to the tetrahydrofolate dehydrogenase/cyclohydrolase family. As to quaternary structure, homodimer.

The enzyme catalyses (6R)-5,10-methylene-5,6,7,8-tetrahydrofolate + NADP(+) = (6R)-5,10-methenyltetrahydrofolate + NADPH. The catalysed reaction is (6R)-5,10-methenyltetrahydrofolate + H2O = (6R)-10-formyltetrahydrofolate + H(+). It functions in the pathway one-carbon metabolism; tetrahydrofolate interconversion. Catalyzes the oxidation of 5,10-methylenetetrahydrofolate to 5,10-methenyltetrahydrofolate and then the hydrolysis of 5,10-methenyltetrahydrofolate to 10-formyltetrahydrofolate. The sequence is that of Bifunctional protein FolD from Bacillus velezensis (strain DSM 23117 / BGSC 10A6 / LMG 26770 / FZB42) (Bacillus amyloliquefaciens subsp. plantarum).